Reading from the N-terminus, the 254-residue chain is Glc operon transcriptional activator (254 aa).

One can recognise an HTH gntR-type domain in the interval 6–74 (RPICEVVAES…QGRDSRVARL (69 aa)). The segment at residues 34 to 53 (ERRLCEKLGFSRSALREGLT) is a DNA-binding region (H-T-H motif).

In terms of biological role, transcriptional activator of the glcDEFGB operon which is associated with glycolate utilization, and encodes malate synthase G and the genes needed for glycolate oxidase activity. Also negatively regulates the transcription of its own gene. Glycolate acts as an effector, but GlcC can also use acetate as an alternative effector. In Escherichia coli O6:H1 (strain CFT073 / ATCC 700928 / UPEC), this protein is Glc operon transcriptional activator (glcC).